A 125-amino-acid polypeptide reads, in one-letter code: Urotensin-2 (125 aa).

Positions 1–20 (MYKLASCCLLFIGFLNPLFS) are cleaved as a signal peptide. The propeptide occupies 21–111 (LPLLDSGEVS…HLLARIRKPY (91 aa)). Cys119 and Cys124 form a disulfide bridge.

It belongs to the urotensin-2 family.

It localises to the secreted. Highly potent vasoconstrictor. This chain is Urotensin-2 (UTS2), found in Macaca mulatta (Rhesus macaque).